Here is a 339-residue protein sequence, read N- to C-terminus: D-erythrose-4-phosphate dehydrogenase (339 aa).

Residues 12-13 (RI) and R81 contribute to the NAD(+) site. Residues 154–156 (SCT), R200, 213–214 (TK), and R236 each bind substrate. The Nucleophile role is filled by C155. Residue N318 participates in NAD(+) binding.

Belongs to the glyceraldehyde-3-phosphate dehydrogenase family. Epd subfamily. In terms of assembly, homotetramer.

It is found in the cytoplasm. The enzyme catalyses D-erythrose 4-phosphate + NAD(+) + H2O = 4-phospho-D-erythronate + NADH + 2 H(+). The protein operates within cofactor biosynthesis; pyridoxine 5'-phosphate biosynthesis; pyridoxine 5'-phosphate from D-erythrose 4-phosphate: step 1/5. Catalyzes the NAD-dependent conversion of D-erythrose 4-phosphate to 4-phosphoerythronate. The protein is D-erythrose-4-phosphate dehydrogenase of Escherichia coli O45:K1 (strain S88 / ExPEC).